The following is a 312-amino-acid chain: MKVTVECALLITLIVEIIIGCLGNGFIAVVNIMDWTKRRRFSLVDQILTALAISRLAFVWSLLTVLVISELHSSLLITRKMLRIINNFWTVTNHFSIWLATCLSIFYFLKIANFSNSIFLSLRWRVKTVVSLTLLVSLLLLLVNVIIINTCIVISVEGYKVNMSYSSHFNNNPQISRIPLFTNTMFTFIPFTVTLTIFLLLIFSLWRHLKKMQHRAKGPRDPSTTAHIKALQMVVTFLFLYTIFFLALVMQAWNNEIQSKTVFNLVFESIALAFPSGHSCVLILGNSKLRQAFLTIIWWLRSSFNAAELSSP.

Residues 1 to 9 are Extracellular-facing; that stretch reads MKVTVECAL. Residues 10–30 form a helical membrane-spanning segment; that stretch reads LITLIVEIIIGCLGNGFIAVV. Residues 31-46 lie on the Cytoplasmic side of the membrane; the sequence is NIMDWTKRRRFSLVDQ. The chain crosses the membrane as a helical span at residues 47–67; sequence ILTALAISRLAFVWSLLTVLV. Residues 68 to 87 are Extracellular-facing; it reads ISELHSSLLITRKMLRIINN. Residues 88–108 form a helical membrane-spanning segment; that stretch reads FWTVTNHFSIWLATCLSIFYF. Over 109–133 the chain is Cytoplasmic; it reads LKIANFSNSIFLSLRWRVKTVVSLT. A helical membrane pass occupies residues 134–154; that stretch reads LLVSLLLLLVNVIIINTCIVI. Residues 155 to 185 are Extracellular-facing; that stretch reads SVEGYKVNMSYSSHFNNNPQISRIPLFTNTM. Asparagine 162 is a glycosylation site (N-linked (GlcNAc...) asparagine). Residues 186-206 traverse the membrane as a helical segment; that stretch reads FTFIPFTVTLTIFLLLIFSLW. Residues 207–229 lie on the Cytoplasmic side of the membrane; sequence RHLKKMQHRAKGPRDPSTTAHIK. A helical membrane pass occupies residues 230–250; that stretch reads ALQMVVTFLFLYTIFFLALVM. Over 251-264 the chain is Extracellular; it reads QAWNNEIQSKTVFN. Residues 265-285 form a helical membrane-spanning segment; it reads LVFESIALAFPSGHSCVLILG. The Cytoplasmic portion of the chain corresponds to 286–312; that stretch reads NSKLRQAFLTIIWWLRSSFNAAELSSP.

It belongs to the G-protein coupled receptor T2R family.

Its subcellular location is the membrane. Putative taste receptor which may play a role in the perception of bitterness. This Rattus norvegicus (Rat) protein is Taste receptor type 2 member 140.